Here is a 621-residue protein sequence, read N- to C-terminus: Anthranilate synthase alpha subunit 2, chloroplastic (621 aa).

The N-terminal 87 residues, 1-87 (MSAVSISAVK…SEEQFTKFKK (87 aa)), are a transit peptide targeting the chloroplast.

The protein belongs to the anthranilate synthase component I family. In terms of assembly, heterotetramer consisting of two non-identical subunits: a beta subunit and a large alpha subunit.

The protein localises to the plastid. Its subcellular location is the chloroplast. The catalysed reaction is chorismate + L-glutamine = anthranilate + pyruvate + L-glutamate + H(+). It functions in the pathway amino-acid biosynthesis; L-tryptophan biosynthesis; L-tryptophan from chorismate: step 1/5. Feedback inhibition by tryptophan. Functionally, part of a heterotetrameric complex that catalyzes the two-step biosynthesis of anthranilate, an intermediate in the biosynthesis of L-tryptophan. In the first step, the glutamine-binding beta subunit of anthranilate synthase (AS) provides the glutamine amidotransferase activity which generates ammonia as a substrate that, along with chorismate, is used in the second step, catalyzed by the large alpha subunit of AS to produce anthranilate. This is Anthranilate synthase alpha subunit 2, chloroplastic (ASA2) from Arabidopsis thaliana (Mouse-ear cress).